We begin with the raw amino-acid sequence, 401 residues long: Type 3 secretion system translocon protein SctE (401 aa).

A coiled-coil region spans residues 129 to 160 (IQRLHEQNMKKIEENQEKIKETEENAKQVKKS). The next 2 helical transmembrane spans lie at 166-186 (IFGWLIAIASVVIGAIMVASG) and 225-245 (LGPILTAIEVALTVVSTVMTF). The stretch at 345-379 (LALNKADMAALQSIIDRLKEELSHLSESHRQVMEL) forms a coiled coil.

Belongs to the SctE/SipB/YopB family. In terms of assembly, the core secretion machinery of the T3SS is composed of approximately 20 different proteins, including cytoplasmic components, a base, an export apparatus and a needle. This subunit is involved in the formation of a pore, called the translocon, in host membrane. Interacts with YopD/SctB. Together with YopD/SctB, forms a multimeric integral membrane complex with a mass of between 500 and 700 kDa.

The protein localises to the secreted. The protein resides in the host membrane. Functionally, component of the type III secretion system (T3SS), also called injectisome, which is used to inject bacterial effector proteins into eukaryotic host cells. YopB/SctE and YopD/SctB are inserted into the host membrane where they form a pore and allow the translocation of effector proteins into the cytosol of target cells. Is an essential virulence determinant. Required for YopE translocation. Essential for the establishment of Yersinia infections in a mouse model system, but not for the targeting of effector Yops. May modulate the host's immune response at a distance from the site of infection. This chain is Type 3 secretion system translocon protein SctE, found in Yersinia enterocolitica.